A 172-amino-acid polypeptide reads, in one-letter code: MNYFNVGKIVNTQGLQGEMRVLSVTDFAEERFKKGAELVLFDEKDQFVQTVTIASHRKQKNFDIIKFKDMYHINTIEKYKGYSLKVAEEDLNDLDDGEFYYHEIIGLEVYEGDSLVGTIKEILQPGANDVWVVKRKGKRDLLLPYIPPVVLNVDIPSKRVDVEILEGLDDED.

In terms of domain architecture, PRC barrel spans Asp-96 to Leu-168.

It belongs to the RimM family. As to quaternary structure, binds ribosomal protein uS19.

The protein resides in the cytoplasm. Functionally, an accessory protein needed during the final step in the assembly of 30S ribosomal subunit, possibly for assembly of the head region. Essential for efficient processing of 16S rRNA. May be needed both before and after RbfA during the maturation of 16S rRNA. It has affinity for free ribosomal 30S subunits but not for 70S ribosomes. This Streptococcus pneumoniae serotype 4 (strain ATCC BAA-334 / TIGR4) protein is Ribosome maturation factor RimM.